We begin with the raw amino-acid sequence, 72 residues long: Large ribosomal subunit protein bL31 (72 aa).

Zn(2+)-binding residues include C16, C18, C38, and C41.

It belongs to the bacterial ribosomal protein bL31 family. Type A subfamily. In terms of assembly, part of the 50S ribosomal subunit. Zn(2+) serves as cofactor.

Functionally, binds the 23S rRNA. The polypeptide is Large ribosomal subunit protein bL31 (Aromatoleum aromaticum (strain DSM 19018 / LMG 30748 / EbN1) (Azoarcus sp. (strain EbN1))).